The sequence spans 1143 residues: Probable ATP-dependent RNA helicase DHX34 (1143 aa).

2 disordered regions span residues 1–24 (MPPP…EEEA) and 75–94 (TSRK…PALA). The span at 76-85 (SRKEEKDPGQ) shows a compositional bias: basic and acidic residues. One can recognise a Helicase ATP-binding domain in the interval 172–332 (LQTLKEHQVV…FSNAPVVQVP (161 aa)). Position 185-192 (185-192 (GDTGCGKS)) interacts with ATP. The DEAH box motif lies at 279-282 (DEVH). A Helicase C-terminal domain is found at 368–536 (SIDHKYPPEE…SLVLQMKSMS (169 aa)). Positions 701–955 (QAAQVGDSYS…LRARWESALD (255 aa)) are negatively regulates interaction with UPF1. Residues 724–766 (LKRQHEEGAGRRRKVLRLQEEQDGGSSDEDRAGPAPPGASDGV) form a disordered region. A phosphoserine mark is found at S749 and S750. Residues 810–1143 (PQLAVPDAFN…EVLRHRKQHV (334 aa)) are required for phosphorylation of UPF1. Not required for interaction with UPF1. Residues 957 to 1143 (QLAHQAQQQL…EVLRHRKQHV (187 aa)) are required for the interaction with SMG1 and subsequent phosphorylation of UPF1.

The protein belongs to the DEAD box helicase family. DEAH subfamily. As to quaternary structure, forms a complex with RUVBL1 and RUVBL2. Part of a complex composed of SMG1, DHX34 and UPF1; within the complex DHX34 acts as a scaffolding protein to facilitate SMG1 phosphorylation of UPF1. Interacts with UPF1, MOV10, EIF4A3, XRN2, SMG6, SMG7, SMG9, UPF3A, UPF3B, CASC3/MLN51, XRN1, DIS3 and DCP1A; the interactions are RNA-independent. Interacts with NCBP1/CPB80; the interaction is RNA-dependent. Interacts (via C-terminus) with SMG1; the interaction is RNA-independent. In terms of tissue distribution, expressed in whole blood, testis and spleen. Also expressed in the brain.

It catalyses the reaction ATP + H2O = ADP + phosphate + H(+). In terms of biological role, probable ATP-binding RNA helicase required for nonsense-mediated decay (NMD) degradation of mRNA transcripts containing premature stop codons. Promotes the phosphorylation of UPF1 along with its interaction with key NMD pathway proteins UPF2 and EIF4A3. Interaction with the RUVBL1-RUVBL2 complex results in loss of nucleotide binding ability and ATP hydrolysis of the complex. Negatively regulates the nucleotide binding ability and ATP hydrolysis of the RUVBL1-RUVBL2 complex via induction of N-terminus conformation changes of the RUVBL2 subunits. This is Probable ATP-dependent RNA helicase DHX34 from Homo sapiens (Human).